The chain runs to 339 residues: Ferredoxin--NADP reductase (339 aa).

Residues Glu-35, Gln-43, Tyr-48, Val-88, Phe-122, Asp-287, and Ser-327 each contribute to the FAD site.

Belongs to the ferredoxin--NADP reductase type 2 family. Homodimer. FAD serves as cofactor.

The enzyme catalyses 2 reduced [2Fe-2S]-[ferredoxin] + NADP(+) + H(+) = 2 oxidized [2Fe-2S]-[ferredoxin] + NADPH. In Leuconostoc citreum (strain KM20), this protein is Ferredoxin--NADP reductase.